An 831-amino-acid chain; its full sequence is AMP deaminase (831 aa).

Disordered stretches follow at residues 26 to 45 (NPGA…QDTP), 66 to 110 (NGTQ…KLLN), and 130 to 149 (NAVV…METT). A phosphoserine mark is found at S79 and S84. Zn(2+)-binding residues include H319 and H321. Residues H321 and 390 to 395 (KFNLKY) each bind substrate. A Zn(2+)-binding site is contributed by H587. Substrate is bound at residue E590. Catalysis depends on H609, which acts as the Proton acceptor. D664 serves as a coordination point for Zn(2+). 665–668 (DPLQ) is a binding site for substrate. S758, S776, S780, and S782 each carry phosphoserine.

It belongs to the metallo-dependent hydrolases superfamily. Adenosine and AMP deaminases family. In terms of assembly, homotetramer. The cofactor is Zn(2+).

It localises to the cytoplasm. It carries out the reaction AMP + H2O + H(+) = IMP + NH4(+). The protein operates within purine metabolism; IMP biosynthesis via salvage pathway; IMP from AMP: step 1/1. Functionally, AMP deaminase plays a critical role in energy metabolism. The sequence is that of AMP deaminase (ada1) from Schizosaccharomyces pombe (strain 972 / ATCC 24843) (Fission yeast).